A 32-amino-acid polypeptide reads, in one-letter code: Mu-theraphotoxin-Se1a (32 aa).

3 disulfides stabilise this stretch: C2/C17, C9/C22, and C16/C28.

This sequence belongs to the neurotoxin 10 (Hwtx-1) family. Expressed by the venom gland.

The protein resides in the secreted. Voltage-gated sodium channel Nav1.7/SCN9A inhibitor. The chain is Mu-theraphotoxin-Se1a from Selenocosmia effera (Tarantula spider).